The primary structure comprises 352 residues: Ubiquitin thioesterase otulin (352 aa).

The segment at 1–48 (MSRGTMPQPEAWPGASCAETPAREAAATARDGGKAAASGQPRPEMQCP) is disordered. Residues 18–37 (AETPAREAAATARDGGKAAA) are compositionally biased toward low complexity. The PIM motif signature appears at 52–57 (EEDMYR). Position 56 is a phosphotyrosine (tyrosine 56). Linear diubiquitin binding regions lie at residues 95–96 (EW) and 124–126 (RGD). The region spanning 118–346 (TSIRRVRGDN…DRHYNIPVRV (229 aa)) is the OTU domain. Residue aspartate 126 is part of the active site. The active-site Nucleophile is cysteine 129. Linear diubiquitin binding stretches follow at residues 255–259 (FFSVL), 283–289 (TGGLEQV), and 336–338 (DDR). Histidine 339 is an active-site residue.

It belongs to the peptidase C65 family. Otulin subfamily. In terms of assembly, interacts (via the PUB domain) with RNF31 (via the PIM motif); the interaction is direct. Interacts with DVL2. Post-translationally, ubiquitinated. In terms of processing, acetylated. Phosphorylated. Phosphorylation at Tyr-56 prevents interaction with RNF31; dephosphorylation promotes interaction with RNF31 and the LUBAC complex.

It is found in the cytoplasm. The catalysed reaction is Thiol-dependent hydrolysis of ester, thioester, amide, peptide and isopeptide bonds formed by the C-terminal Gly of ubiquitin (a 76-residue protein attached to proteins as an intracellular targeting signal).. Deubiquitinase that specifically removes linear ('Met-1'-linked) polyubiquitin chains to substrates and acts as a regulator of angiogenesis and innate immune response. Required during angiogenesis, craniofacial and neuronal development by regulating the canonical Wnt signaling together with the LUBAC complex. Acts as a negative regulator of NF-kappa-B by regulating the activity of the LUBAC complex. OTULIN function is mainly restricted to homeostasis of the LUBAC complex: acts by removing 'Met-1'-linked autoubiquitination of the LUBAC complex, thereby preventing inactivation of the LUBAC complex. Acts as a key negative regulator of inflammation by restricting spontaneous inflammation and maintaining immune homeostasis. In myeloid cell, required to prevent unwarranted secretion of cytokines leading to inflammation and autoimmunity by restricting linear polyubiquitin formation. Plays a role in innate immune response by restricting linear polyubiquitin formation on LUBAC complex in response to NOD2 stimulation, probably to limit NOD2-dependent pro-inflammatory signaling. This Homo sapiens (Human) protein is Ubiquitin thioesterase otulin.